The chain runs to 131 residues: Biogenesis of lysosome-related organelles complex 1 subunit CNL1 (131 aa).

Residues 1–29 (MSAPDSNSGHAHDSAQNEGAAEGTRDPFG) form a disordered region. Residues 73–101 (DAIDINIEEMRRILQKCEELETHFDMLDQ) are a coiled coil.

This sequence belongs to the BLOC1S4 family. As to quaternary structure, component of the biogenesis of lysosome-related organelles complex-1 (BLOC-1).

It localises to the cytoplasm. In terms of biological role, component of the biogenesis of lysosome-related organelles complex-1 (BLOC-1), a complex that is involved in endosomal cargo sorting. This is Biogenesis of lysosome-related organelles complex 1 subunit CNL1 (CLN1) from Lachancea thermotolerans (strain ATCC 56472 / CBS 6340 / NRRL Y-8284) (Yeast).